Reading from the N-terminus, the 235-residue chain is Methylosome subunit pICln (235 aa).

The segment at 1-21 (MSFLKSFPPPGSAEGLRQQQP) is disordered. The residue at position 2 (Ser2) is an N-acetylserine. A phosphoserine mark is found at Ser100, Ser142, Ser191, Ser193, Ser196, and Ser208. The disordered stretch occupies residues 133–157 (LHPDPEDEDSDDYDGEEYDVEAHEQ). Acidic residues predominate over residues 137-151 (PEDEDSDDYDGEEYD). The segment at 195-217 (SSQYNMAGVRTEDSTRDYEDGME) is disordered. Positions 204–213 (RTEDSTRDYE) are enriched in basic and acidic residues. Phosphothreonine is present on Thr221.

The protein belongs to the pICln (TC 1.A.47) family. As to quaternary structure, component of the methylosome, a 20S complex containing at least PRMT5/SKB1, WDR77/MEP50 and CLNS1A/pICln. May mediate SNRPD1 and SNRPD3 methylation. Forms a 6S pICln-Sm complex composed of CLNS1A/pICln, SNRPD1, SNRPD2, SNRPE, SNRPF and SNRPG; ring-like structure where CLNS1A/pICln mimics additional Sm proteins and which is unable to assemble into the core snRNP. Interacts with LSM10 and LSM11.

The protein resides in the cytoplasm. Its subcellular location is the cytosol. The protein localises to the nucleus. It is found in the cytoskeleton. Involved in both the assembly of spliceosomal snRNPs and the methylation of Sm proteins. Chaperone that regulates the assembly of spliceosomal U1, U2, U4 and U5 small nuclear ribonucleoproteins (snRNPs), the building blocks of the spliceosome, and thereby plays an important role in the splicing of cellular pre-mRNAs. Most spliceosomal snRNPs contain a common set of Sm proteins SNRPB, SNRPD1, SNRPD2, SNRPD3, SNRPE, SNRPF and SNRPG that assemble in a heptameric protein ring on the Sm site of the small nuclear RNA to form the core snRNP (Sm core). In the cytosol, the Sm proteins SNRPD1, SNRPD2, SNRPE, SNRPF and SNRPG are trapped in an inactive 6S pICln-Sm complex by the chaperone CLNS1A that controls the assembly of the core snRNP. Dissociation by the SMN complex of CLNS1A from the trapped Sm proteins and their transfer to an SMN-Sm complex triggers the assembly of core snRNPs and their transport to the nucleus. The chain is Methylosome subunit pICln (CLNS1A) from Canis lupus familiaris (Dog).